A 358-amino-acid polypeptide reads, in one-letter code: GTPase Obg (358 aa).

Residues 1–159 (MKFVDEVTIR…RNLHLELRLL (159 aa)) enclose the Obg domain. In terms of domain architecture, OBG-type G spans 160-334 (ADVGLLGMPN…LAQDVMNRLE (175 aa)). GTP is bound by residues 166–173 (GMPNAGKS), 191–195 (FTTLY), 213–216 (DIPG), 284–287 (NKLD), and 315–317 (SAL). Positions 173 and 193 each coordinate Mg(2+). The segment at 337–358 (DEEAREAGERARREQRQEEGPE) is disordered. Over residues 341 to 358 (REAGERARREQRQEEGPE) the composition is skewed to basic and acidic residues.

It belongs to the TRAFAC class OBG-HflX-like GTPase superfamily. OBG GTPase family. Monomer. The cofactor is Mg(2+).

The protein resides in the cytoplasm. An essential GTPase which binds GTP, GDP and possibly (p)ppGpp with moderate affinity, with high nucleotide exchange rates and a fairly low GTP hydrolysis rate. Plays a role in control of the cell cycle, stress response, ribosome biogenesis and in those bacteria that undergo differentiation, in morphogenesis control. The protein is GTPase Obg of Alkalilimnicola ehrlichii (strain ATCC BAA-1101 / DSM 17681 / MLHE-1).